Reading from the N-terminus, the 231-residue chain is MAKLSKRQKLINEKVDSTKAYSIEEAVALLQELSKVKFSETVDAAINLGIDPRKSDQAVRGATSLPHGTGKDVRVAVFTQGANAEAAKEAGAEFVGMEDLAEQIKGGMMDFDVVIADPAAMRVVGMLGQVLGPRGLMPNPKTGTVTPDVVGAVKNAKAGQVRYRADKGGIIHGGIGKISFDANAIKENLEALISDLKKAKPASAKGIYVKRVSLSTTMGPGLTIDQSSLTA.

It belongs to the universal ribosomal protein uL1 family. Part of the 50S ribosomal subunit.

Functionally, binds directly to 23S rRNA. The L1 stalk is quite mobile in the ribosome, and is involved in E site tRNA release. Its function is as follows. Protein L1 is also a translational repressor protein, it controls the translation of the L11 operon by binding to its mRNA. This chain is Large ribosomal subunit protein uL1, found in Saccharophagus degradans (strain 2-40 / ATCC 43961 / DSM 17024).